A 305-amino-acid chain; its full sequence is Insulin-like growth factor-binding protein 2 (305 aa).

Positions 1-34 are cleaved as a signal peptide; sequence MLPRLGGPALPLLLPSLLLLLLLGAGGCGPGVRA. The IGFBP N-terminal domain occupies 36–118; the sequence is VLFRCPPCTP…VTGAGTCEKR (83 aa). Cystine bridges form between Cys40/Cys68, Cys43/Cys70, Cys51/Cys71, Cys59/Cys74, Cys82/Cys95, Cys89/Cys115, Cys207/Cys241, Cys252/Cys263, and Cys265/Cys286. The Thyroglobulin type-1 domain occupies 204–286; sequence RTPCQQELDQ…APTIRGDPEC (83 aa). Residues 281 to 283 carry the Cell attachment site motif; the sequence is RGD.

As to quaternary structure, interacts with IGF1. Interacts with IGF2. Interacts (via RGD motif) with integrin alpha5/ITGA5; this interaction induces cell migration, adhesion or apoptosis according to the context. Interacts with PTPRB; this interaction leads to PTPRB dimerization and inactivation. In terms of processing, cleaved by MMP9 leading to release of free IGF2 from IGFBP2-IGF2 complex, which contributes to enhance the motility and the growth of astrocytes. O-glycosylated. Highly expressed in adult liver, but also in kidney, lung, brain, spleen, testis and ovary.

The protein localises to the secreted. Multifunctional protein that plays a critical role in regulating the availability of IGFs such as IGF1 and IGF2 to their receptors and thereby regulates IGF-mediated cellular processes including proliferation, differentiation, and apoptosis in a cell-type specific manner. Functions coordinately with receptor protein tyrosine phosphatase beta/PTPRB and the IGF1 receptor to regulate IGF1-mediated signaling by stimulating the phosphorylation of PTEN leading to its inactivation and AKT1 activation. Plays a positive role in cell migration via interaction with integrin alpha5/ITGA5 through an RGD motif. Additionally, interaction with ITGA5/ITGB1 enhances the adhesion of endothelial progenitor cells to endothelial cells. Upon mitochondrial damage, facilitates apoptosis with ITGA5 of podocytes, and then activates the phosphorylation of focal adhesion kinase (FAK)-mediated mitochondrial injury. In Mus musculus (Mouse), this protein is Insulin-like growth factor-binding protein 2 (Igfbp2).